Here is a 250-residue protein sequence, read N- to C-terminus: uncharacterized protein (250 aa).

A Glycyl lysine isopeptide (Lys-Gly) (interchain with G-Cter in ubiquitin) cross-link involves residue lysine 17. The segment at 30 to 67 (REEDYVATSKDNIHHHPCDWSAKPSQRQNENEQKSTIR) is disordered.

This is an uncharacterized protein from Saccharomyces cerevisiae (strain ATCC 204508 / S288c) (Baker's yeast).